We begin with the raw amino-acid sequence, 36 residues long: Kappa-theraphotoxin-Pg1a (36 aa).

3 disulfides stabilise this stretch: Cys-4–Cys-19, Cys-11–Cys-24, and Cys-18–Cys-31.

This sequence belongs to the neurotoxin 10 (Hwtx-1) family. 44 (Jztx-4) subfamily. As to expression, expressed by the venom gland.

The protein localises to the secreted. In terms of biological role, gating modifier of Kv2.1/KCNB1 (IC(50)=5.1 nM), Kv2.2/KCNB2 and Kv4.3/KCND3 channels (IC(50)=39 nM). Acts by shifting the channel activation to more depolarized potentials by stabilizing the resting conformation of the voltage sensor. It completely inhibits opening of the Kv2.1/KCNB1 channel at negative membrane voltages and dramatically shifts channel activation to positive voltages. May act by partitioning into lipid membranes and then by binding the voltage sensor paddle of the channel from a place within the membrane. The protein is Kappa-theraphotoxin-Pg1a of Chilobrachys guangxiensis (Chinese earth tiger tarantula).